A 308-amino-acid polypeptide reads, in one-letter code: UDP-N-acetylenolpyruvoylglucosamine reductase (308 aa).

Residues 32–196 (VGGPAARLYK…ISAKLQLSPG (165 aa)) form the FAD-binding PCMH-type domain. Residue Arg176 is part of the active site. The Proton donor role is filled by Ser225. Glu296 is an active-site residue.

It belongs to the MurB family. It depends on FAD as a cofactor.

The protein localises to the cytoplasm. It carries out the reaction UDP-N-acetyl-alpha-D-muramate + NADP(+) = UDP-N-acetyl-3-O-(1-carboxyvinyl)-alpha-D-glucosamine + NADPH + H(+). It participates in cell wall biogenesis; peptidoglycan biosynthesis. In terms of biological role, cell wall formation. This Legionella pneumophila subsp. pneumophila (strain Philadelphia 1 / ATCC 33152 / DSM 7513) protein is UDP-N-acetylenolpyruvoylglucosamine reductase.